The following is a 196-amino-acid chain: Orotate phosphoribosyltransferase (196 aa).

Residue 117–125 (EDVVTTGLS) participates in 5-phospho-alpha-D-ribose 1-diphosphate binding. Orotate is bound by residues T121 and R149.

It belongs to the purine/pyrimidine phosphoribosyltransferase family. PyrE subfamily. As to quaternary structure, homodimer. It depends on Mg(2+) as a cofactor.

The catalysed reaction is orotidine 5'-phosphate + diphosphate = orotate + 5-phospho-alpha-D-ribose 1-diphosphate. Its pathway is pyrimidine metabolism; UMP biosynthesis via de novo pathway; UMP from orotate: step 1/2. Functionally, catalyzes the transfer of a ribosyl phosphate group from 5-phosphoribose 1-diphosphate to orotate, leading to the formation of orotidine monophosphate (OMP). This chain is Orotate phosphoribosyltransferase, found in Rhizorhabdus wittichii (strain DSM 6014 / CCUG 31198 / JCM 15750 / NBRC 105917 / EY 4224 / RW1) (Sphingomonas wittichii).